We begin with the raw amino-acid sequence, 359 residues long: CDP-glucose 4,6-dehydratase (359 aa).

This sequence belongs to the NAD(P)-dependent epimerase/dehydratase family. NAD(+) serves as cofactor.

It carries out the reaction CDP-D-glucose = CDP-4-dehydro-6-deoxy-D-glucose + H2O. Its pathway is nucleotide-sugar biosynthesis; CDP-3,6-dideoxy-D-mannose biosynthesis; CDP-3,6-dideoxy-D-mannose from CTP and alpha-D-glucose 1-phosphate: step 2/5. It functions in the pathway bacterial outer membrane biogenesis; LPS O-antigen biosynthesis. The protein is CDP-glucose 4,6-dehydratase (rfbG) of Salmonella typhimurium (strain LT2 / SGSC1412 / ATCC 700720).